We begin with the raw amino-acid sequence, 349 residues long: Green-sensitive opsin-2 (349 aa).

Over 1 to 36 (MNGTEGNNFYIPMSNRTGLVRSPYEYTQYYLADPWQ) the chain is Extracellular. N-linked (GlcNAc...) asparagine glycans are attached at residues Asn-2 and Asn-15. The chain crosses the membrane as a helical span at residues 37–61 (FKALAFYMFFLICFGLPINVLTLLV). At 62–73 (TAQHKKLRQPLN) the chain is on the cytoplasmic side. A helical transmembrane segment spans residues 74–99 (YILVNLAFAGTIMAFFGFTVTFYCSI). The Extracellular portion of the chain corresponds to 100–113 (NGYMALGPTGCAIE). A disulfide bridge connects residues Cys-110 and Cys-187. Residues 114–133 (GFFATLGGQVALWSLVVLAI) form a helical membrane-spanning segment. Over 134–152 (ERYIVVCKPMGSFKFSSNH) the chain is Cytoplasmic. The chain crosses the membrane as a helical span at residues 153–176 (AMAGIAFTWVMASSCAVPPLFGWS). Over 177-202 (RYIPEGMQTSCGPDYYTLNPEFNNES) the chain is Extracellular. The N-linked (GlcNAc...) asparagine glycan is linked to Asn-200. The chain crosses the membrane as a helical span at residues 203-230 (YVLYMFSCHFCVPVTTIFFTYGSLVCTV). Residues 231–252 (KAAAAQQQESESTQKAEREVTR) are Cytoplasmic-facing. A helical membrane pass occupies residues 253-276 (MVILMVLGFLVAWVPYASFAAWIF). Topologically, residues 277-284 (FNRGAAFS) are extracellular. The helical transmembrane segment at 285–309 (AQAMAIPAFFSKASALFNPIIYVLL) threads the bilayer. Residue Lys-296 is modified to N6-(retinylidene)lysine. Over 310 to 349 (NKQFRSCMLNTLFCGKSPLGDDESSSVSTSKTEVSSVSPA) the chain is Cytoplasmic. Residues 328–349 (LGDDESSSVSTSKTEVSSVSPA) form a disordered region. A compositionally biased stretch (low complexity) spans 334-349 (SSVSTSKTEVSSVSPA).

This sequence belongs to the G-protein coupled receptor 1 family. Opsin subfamily. Post-translationally, phosphorylated on some or all of the serine and threonine residues present in the C-terminal region.

The protein resides in the membrane. Functionally, visual pigments are the light-absorbing molecules that mediate vision. They consist of an apoprotein, opsin, covalently linked to cis-retinal. This Danio rerio (Zebrafish) protein is Green-sensitive opsin-2 (opn1mw2).